Consider the following 262-residue polypeptide: UPF0758 protein BTH_I0781 (262 aa).

A disordered region spans residues 1 to 45; the sequence is MQYEIVSAGENVGDEPERERPVAQAAAAPGIPRPAALPAAGAARR. Positions 22-43 are enriched in low complexity; it reads VAQAAAAPGIPRPAALPAAGAA. Residues 140–262 form the MPN domain; sequence LVDSPGAVDD…TFSFAQAGWI (123 aa). 3 residues coordinate Zn(2+): histidine 211, histidine 213, and aspartate 224. The short motif at 211–224 is the JAMM motif element; it reads HNHPSGAVRPSAAD.

The protein belongs to the UPF0758 family.

The polypeptide is UPF0758 protein BTH_I0781 (Burkholderia thailandensis (strain ATCC 700388 / DSM 13276 / CCUG 48851 / CIP 106301 / E264)).